Reading from the N-terminus, the 359-residue chain is 3-dehydroquinate synthase (359 aa).

Residues 72-77 (EGEIHK), 106-110 (GVIGD), 130-131 (TS), Lys143, Lys152, and 170-173 (CLKT) each bind NAD(+). Residues Glu185, His248, and His264 each coordinate Zn(2+).

This sequence belongs to the sugar phosphate cyclases superfamily. Dehydroquinate synthase family. Co(2+) serves as cofactor. The cofactor is Zn(2+). NAD(+) is required as a cofactor.

The protein resides in the cytoplasm. It carries out the reaction 7-phospho-2-dehydro-3-deoxy-D-arabino-heptonate = 3-dehydroquinate + phosphate. It participates in metabolic intermediate biosynthesis; chorismate biosynthesis; chorismate from D-erythrose 4-phosphate and phosphoenolpyruvate: step 2/7. In terms of biological role, catalyzes the conversion of 3-deoxy-D-arabino-heptulosonate 7-phosphate (DAHP) to dehydroquinate (DHQ). The protein is 3-dehydroquinate synthase of Dehalococcoides mccartyi (strain ATCC BAA-2100 / JCM 16839 / KCTC 5957 / BAV1).